The chain runs to 134 residues: 6,7-dimethyl-8-ribityllumazine synthase (134 aa).

5-amino-6-(D-ribitylamino)uracil is bound by residues phenylalanine 11, 43 to 45 (AYD), and 67 to 69 (AIV). Residue 72–73 (DT) participates in (2S)-2-hydroxy-3-oxobutyl phosphate binding. Histidine 75 (proton donor) is an active-site residue. A 5-amino-6-(D-ribitylamino)uracil-binding site is contributed by phenylalanine 100. Arginine 115 is a binding site for (2S)-2-hydroxy-3-oxobutyl phosphate.

Belongs to the DMRL synthase family.

It catalyses the reaction (2S)-2-hydroxy-3-oxobutyl phosphate + 5-amino-6-(D-ribitylamino)uracil = 6,7-dimethyl-8-(1-D-ribityl)lumazine + phosphate + 2 H2O + H(+). It participates in cofactor biosynthesis; riboflavin biosynthesis; riboflavin from 2-hydroxy-3-oxobutyl phosphate and 5-amino-6-(D-ribitylamino)uracil: step 1/2. Its function is as follows. Catalyzes the formation of 6,7-dimethyl-8-ribityllumazine by condensation of 5-amino-6-(D-ribitylamino)uracil with 3,4-dihydroxy-2-butanone 4-phosphate. This is the penultimate step in the biosynthesis of riboflavin. This is 6,7-dimethyl-8-ribityllumazine synthase from Halorubrum lacusprofundi (strain ATCC 49239 / DSM 5036 / JCM 8891 / ACAM 34).